The following is a 208-amino-acid chain: Small ribosomal subunit protein uS9c (208 aa).

A chloroplast-targeting transit peptide spans 1-51 (MAVSISSLTSSFASLSFTSNLTPKPQTLPMARTKPFSLSNPAVVKPLVITA). Residue Thr52 is modified to N-acetylthreonine. Residues 185-208 (DSRIVERKKPGLKKARKAPQFSKR) are disordered. Residues 194-208 (PGLKKARKAPQFSKR) show a composition bias toward basic residues.

As to quaternary structure, component of the chloroplast small ribosomal subunit (SSU). Mature 70S chloroplast ribosomes of higher plants consist of a small (30S) and a large (50S) subunit. The 30S small subunit contains 1 molecule of ribosomal RNA (16S rRNA) and 24 different proteins. The 50S large subunit contains 3 rRNA molecules (23S, 5S and 4.5S rRNA) and 33 different proteins. uS9c binds directly to 16S ribosomal RNA. uS9c interacts with translation factor pY (PSRP1).

It is found in the plastid. The protein resides in the chloroplast. In terms of biological role, component of the chloroplast ribosome (chloro-ribosome), a dedicated translation machinery responsible for the synthesis of chloroplast genome-encoded proteins, including proteins of the transcription and translation machinery and components of the photosynthetic apparatus. This chain is Small ribosomal subunit protein uS9c (PRPS9), found in Spinacia oleracea (Spinach).